The chain runs to 501 residues: Histone deacetylase 19 (501 aa).

The histone deacetylase stretch occupies residues 17–329; sequence RKVCYFYDPE…WCYETGVALG (313 aa). The Proton donor/acceptor role is filled by H149. Zn(2+)-binding residues include D184, H186, and D272. Positions 383 to 501 are disordered; that stretch reads HAPSVPFQER…GAEQAFPPKT (119 aa). A compositionally biased stretch (acidic residues) spans 397-407; that stretch reads ETPEVDEDQED. The residue at position 416 (S416) is a Phosphoserine. Composition is skewed to basic and acidic residues over residues 422–457 and 479–488; these read DDRK…KGCE and ASVKMEEEGT.

It belongs to the histone deacetylase family. HD type 1 subfamily. Interacts with SIN3, SAP18 and TPR1. Interacts with CDKE-1, MED14 and LUG. Interacts with TPL. Interacts with AHL22. It depends on Zn(2+) as a cofactor. As to expression, highly expressed in leaves, stems, flowers and young siliques.

It localises to the nucleus. It catalyses the reaction N(6)-acetyl-L-lysyl-[histone] + H2O = L-lysyl-[histone] + acetate. Responsible for the deacetylation of lysine residues on the N-terminal part of the core histones (H2A, H2B, H3 and H4). Histone deacetylation gives a tag for epigenetic repression and plays an important role in transcriptional regulation, cell cycle progression and developmental events. Histone deacetylases act via the formation of large multiprotein complexes. HDA19 is involved in jasmonic acid and ethylene signaling of pathogen response. Part of a repressor complex including APETALA2 (AP2) and TOPLESS (TPL) that control the expression domains of numerous floral organ identity genes. Involved in negative regulation of salinity stress response. Represses the expression of stress tolerance-related genes, genes coding for late embryogenesis abundant (LEA) proteins that prevent protein aggregation, and positive regulators of abscisic acid (ABA) signaling, such as ABI5 and NAC019. This is Histone deacetylase 19 from Arabidopsis thaliana (Mouse-ear cress).